Reading from the N-terminus, the 419-residue chain is Vascular endothelial growth factor C (419 aa).

The N-terminal stretch at 1 to 31 is a signal peptide; that stretch reads MHLLGFFSVACSLLAAALLPGPREAPAAAAA. A propeptide spans 32-111 (or 102); the sequence is FESGLDLSDA…RTEETIKFAA (80 aa). 3 disulfide bridges follow: Cys-131-Cys-173, Cys-162-Cys-209, and Cys-166-Cys-211. Residues Asn-175, Asn-205, and Asn-240 are each glycosylated (N-linked (GlcNAc...) asparagine). Positions 228–419 are excised as a propeptide; that stretch reads SLPATLPQCQ…PSYWKRPQMS (192 aa). Repeat copies occupy residues 280-295, 304-319, 328-343, and 347-362. The interval 280 to 362 is 4 X 16 AA repeats of C-X(10)-C-X-C-X(1,3)-C; that stretch reads CGPNKELDEE…LNPGKCACEC (83 aa).

The protein belongs to the PDGF/VEGF growth factor family. As to quaternary structure, homodimer; non-covalent and antiparallel. Interacts with FLT4/VEGFR3; the interaction is required for FLT4/VEGFR3 homodimarization and activation. Undergoes a complex proteolytic maturation which generates a variety of processed secreted forms with increased activity toward VEGFR-3, but only the fully processed form could activate VEGFR-2. VEGF-C first form an antiparallel homodimer linked by disulfide bonds. Before secretion, a cleavage occurs between Arg-227 and Ser-228 producing a heterotetramer. The next extracellular step of the processing removes the N-terminal propeptide. Finally the mature VEGF-C is composed mostly of two VEGF homology domains (VHDs) bound by non-covalent interactions. Expressed in the spleen. Expressed in the lymph node, thymus, appendix and bone marrow. Expressed in the heart, placenta, skeletal muscle, ovary and small intestine. Expressed in the prostate, testis and colon.

It localises to the secreted. In terms of biological role, growth factor active in angiogenesis, and endothelial cell growth, stimulating their proliferation and migration and also has effects on the permeability of blood vessels. May function in angiogenesis of the venous and lymphatic vascular systems during embryogenesis, and also in the maintenance of differentiated lymphatic endothelium in adults. Binds and activates KDR/VEGFR2 and FLT4/VEGFR3 receptors. This is Vascular endothelial growth factor C (VEGFC) from Homo sapiens (Human).